Here is a 417-residue protein sequence, read N- to C-terminus: 3-isopropylmalate dehydratase large subunit 2 (417 aa).

Positions 298, 358, and 361 each coordinate [4Fe-4S] cluster.

It belongs to the aconitase/IPM isomerase family. LeuC type 2 subfamily. As to quaternary structure, heterodimer of LeuC and LeuD. [4Fe-4S] cluster is required as a cofactor.

The enzyme catalyses (2R,3S)-3-isopropylmalate = (2S)-2-isopropylmalate. The protein operates within amino-acid biosynthesis; L-leucine biosynthesis; L-leucine from 3-methyl-2-oxobutanoate: step 2/4. Its function is as follows. Catalyzes the isomerization between 2-isopropylmalate and 3-isopropylmalate, via the formation of 2-isopropylmaleate. This chain is 3-isopropylmalate dehydratase large subunit 2, found in Thermotoga maritima (strain ATCC 43589 / DSM 3109 / JCM 10099 / NBRC 100826 / MSB8).